Here is a 659-residue protein sequence, read N- to C-terminus: Homeobox protein slou (659 aa).

Residues 1–21 show a composition bias toward polar residues; the sequence is MVMLQSPAQKASDSASAQNTA. Disordered stretches follow at residues 1-63, 94-152, 198-298, 316-349, 376-440, and 455-548; these read MVML…PAAK, MSSE…SFSS, AQQH…AAPS, TQASSTSALASASNSVSNASISISNSSSGSPSGR, QIAA…DRDA, and PNKF…PRRA. Composition is skewed to low complexity over residues 27-51, 95-108, and 120-135; these read SPNSNPDSPKSNTSPDVASADSVVS, SSESGSLLSRLSPL, and HNNNNSLTNHNANSNT. The span at 136–152 shows a compositional bias: polar residues; the sequence is RRSQSPPASVGSVSFSS. A compositionally biased stretch (basic residues) spans 201 to 232; sequence HMHHHQHQHHQHPAHPHSHQHPHPHPHPHPHP. 7 consecutive repeat copies span residues 221–222, 223–224, 225–226, 227–228, 229–230, 231–232, and 233–234. The tract at residues 221–234 is 7 X 2 AA tandem repeats of H-P; it reads HPHPHPHPHPHPHP. Pro residues-rich tracts occupy residues 250-263 and 275-286; these read PPSPATSPLSPPTS and PIAPPQNPPHSS. Composition is skewed to low complexity over residues 287–298 and 316–347; these read QPPQQQQVAAPS and TQASSTSALASASNSVSNASISISNSSSGSPS. The span at 388-401 shows a compositional bias: acidic residues; it reads SEELNVDGNDEDSN. Residues 417–435 show a composition bias toward low complexity; that stretch reads RSVNSSAAANPSSASTSAS. 2 stretches are compositionally biased toward acidic residues: residues 478–492 and 500–519; these read RDEEMQERLDDDQSE and NDMDQDDMCDDGSDIDDPSS. Gly residues predominate over residues 528 to 543; it reads SRNGDGKSGGGGGGGS. A DNA-binding region (homeobox) is located at residues 545 to 604; it reads PRRARTAFTYEQLVSLENKFKTTRYLSVCERLNLALSLSLTETQVKIWFQNRRTKWKKQN.

It belongs to the NK-1 homeobox family. Mesodermal precursor cells of distinct muscles during embryogenesis, a subset of neuronal cells of the CNS and their precursors and also in cells of a small region of the midgut.

The protein resides in the nucleus. May play a role in specifying the identity of particular somatic muscles and neurons of the CNS. The polypeptide is Homeobox protein slou (slou) (Drosophila melanogaster (Fruit fly)).